Reading from the N-terminus, the 148-residue chain is Deoxyuridine 5'-triphosphate nucleotidohydrolase (148 aa).

Substrate contacts are provided by residues 65 to 67 (RSG), Asn78, 82 to 84 (TID), and Lys92.

This sequence belongs to the dUTPase family. Mg(2+) serves as cofactor.

The enzyme catalyses dUTP + H2O = dUMP + diphosphate + H(+). Its pathway is pyrimidine metabolism; dUMP biosynthesis; dUMP from dCTP (dUTP route): step 2/2. Its function is as follows. This enzyme is involved in nucleotide metabolism: it produces dUMP, the immediate precursor of thymidine nucleotides and it decreases the intracellular concentration of dUTP so that uracil cannot be incorporated into DNA. In Chlorobium luteolum (strain DSM 273 / BCRC 81028 / 2530) (Pelodictyon luteolum), this protein is Deoxyuridine 5'-triphosphate nucleotidohydrolase.